The following is a 132-amino-acid chain: Small ribosomal subunit protein uS8 (132 aa).

This sequence belongs to the universal ribosomal protein uS8 family. As to quaternary structure, part of the 30S ribosomal subunit. Contacts proteins S5 and S12.

In terms of biological role, one of the primary rRNA binding proteins, it binds directly to 16S rRNA central domain where it helps coordinate assembly of the platform of the 30S subunit. The protein is Small ribosomal subunit protein uS8 of Bifidobacterium adolescentis (strain ATCC 15703 / DSM 20083 / NCTC 11814 / E194a).